Consider the following 483-residue polypeptide: Cobyric acid synthase (483 aa).

The GATase cobBQ-type domain maps to 248 to 435; sequence LLKVVVPVLP…LHGLFETPAA (188 aa). The active-site Nucleophile is Cys-329. His-427 is a catalytic residue.

The protein belongs to the CobB/CobQ family. CobQ subfamily.

It participates in cofactor biosynthesis; adenosylcobalamin biosynthesis. Functionally, catalyzes amidations at positions B, D, E, and G on adenosylcobyrinic A,C-diamide. NH(2) groups are provided by glutamine, and one molecule of ATP is hydrogenolyzed for each amidation. The polypeptide is Cobyric acid synthase (Pseudomonas fluorescens (strain ATCC BAA-477 / NRRL B-23932 / Pf-5)).